A 446-amino-acid chain; its full sequence is uncharacterized protein (446 aa).

Residues 141–282 (TEAETNGTRP…GPKPKVKRVS (142 aa)) form a disordered region. The segment covering 159–170 (NSGSKPKAGTQS) has biased composition (polar residues). The span at 194 to 210 (IKSERRSISQGGEKDKA) shows a compositional bias: basic and acidic residues. Phosphoserine occurs at positions 200, 202, 212, and 214. Low complexity-rich tracts occupy residues 211–221 (SSSSPSSSQQS) and 229–239 (SPSQQNSRSSS). The residue at position 251 (serine 251) is a Phosphoserine. A compositionally biased stretch (basic residues) spans 269–280 (GKSRGPKPKVKR). Phosphoserine is present on residues serine 282 and serine 307.

This is an uncharacterized protein from Drosophila melanogaster (Fruit fly).